The following is a 250-amino-acid chain: MRRPLLAGNWKMHYGVSEGVALVEALSADLTDLTDRDVLVCPPFTLLGSLAPLLDGTAVALGAQNMHYEAKGAYTGEIAPQMLKELGCSYVILGHSERRQYFGETDALINRKAHAALANGLKPIVCVGEVKAERDSGQAESVVVGQLRGSLAGLSAEQLRGVVIAYEPVWAIGTGDTATPADAQAMHARIRAELAALSDQATADAVIIQYGGSVKPDNVDELMAQPDIDGALVGGASLKAADFIRIVRFK.

9–11 is a substrate binding site; it reads NWK. Histidine 95 (electrophile) is an active-site residue. The active-site Proton acceptor is the glutamate 167. Substrate-binding positions include glycine 173, serine 213, and 234–235; that span reads GG.

It belongs to the triosephosphate isomerase family. Homodimer.

The protein localises to the cytoplasm. The catalysed reaction is D-glyceraldehyde 3-phosphate = dihydroxyacetone phosphate. Its pathway is carbohydrate biosynthesis; gluconeogenesis. It participates in carbohydrate degradation; glycolysis; D-glyceraldehyde 3-phosphate from glycerone phosphate: step 1/1. Its function is as follows. Involved in the gluconeogenesis. Catalyzes stereospecifically the conversion of dihydroxyacetone phosphate (DHAP) to D-glyceraldehyde-3-phosphate (G3P). This is Triosephosphate isomerase from Herpetosiphon aurantiacus (strain ATCC 23779 / DSM 785 / 114-95).